We begin with the raw amino-acid sequence, 506 residues long: Glutamyl-tRNA(Gln) amidotransferase subunit A, mitochondrial (506 aa).

Residues lysine 62 and serine 141 each act as charge relay system in the active site. Serine 165 acts as the Acyl-ester intermediate in catalysis.

Belongs to the amidase family. GatA subfamily. As to quaternary structure, subunit of the heterotrimeric GatCAB amidotransferase (AdT) complex, composed of A, B and C subunits.

Its subcellular location is the mitochondrion. The catalysed reaction is L-glutamyl-tRNA(Gln) + L-glutamine + ATP + H2O = L-glutaminyl-tRNA(Gln) + L-glutamate + ADP + phosphate + H(+). Allows the formation of correctly charged Gln-tRNA(Gln) through the transamidation of misacylated Glu-tRNA(Gln) in the mitochondria. The reaction takes place in the presence of glutamine and ATP through an activated gamma-phospho-Glu-tRNA(Gln). This Emericella nidulans (strain FGSC A4 / ATCC 38163 / CBS 112.46 / NRRL 194 / M139) (Aspergillus nidulans) protein is Glutamyl-tRNA(Gln) amidotransferase subunit A, mitochondrial.